The chain runs to 123 residues: Guanine nucleotide exchange factor MSS4 (123 aa).

Residue Met-1 is modified to N-acetylmethionine. One can recognise an MSS4 domain in the interval 9–123 (ELVSAEGRNR…YVALERVSHE (115 aa)). The Zn(2+) site is built by Cys-23, Cys-26, Cys-94, and Cys-97.

Belongs to the DSS4/MSS4 family. In terms of assembly, interacts with RAB8A. As to expression, ubiquitous.

Its function is as follows. Guanine-nucleotide-releasing protein that acts on members of the SEC4/YPT1/RAB subfamily. Stimulates GDP release from both YPT1, RAB3A and RAB10, but is less active on these proteins than on the SEC4 protein. Might play a general role in vesicular transport. This chain is Guanine nucleotide exchange factor MSS4 (RABIF), found in Homo sapiens (Human).